A 2053-amino-acid chain; its full sequence is Cell adhesion molecule DSCAML1 (2053 aa).

The first 18 residues, 1 to 18 (MWLVTFLLLLDSLHKARP), serve as a signal peptide directing secretion. Ig-like C2-type domains follow at residues 19-119 (EDVG…NIRV), 115-217 (PNIR…ARLS), 226-306 (PTIL…AEAT), 314-402 (PLHV…AIIA), 408-501 (PRIV…ARIN), 506-586 (PSIR…LSIS), 596-685 (PPLI…RQLI), 690-784 (PRFV…MFLT), and 788-885 (PAMI…LTVQ). Residues 19–1591 (EDVGTSLYFV…AQGEGDDVKK (1573 aa)) lie on the Extracellular side of the membrane. Residues Asn29 and Asn79 are each glycosylated (N-linked (GlcNAc...) asparagine). 5 cysteine pairs are disulfide-bonded: Cys47-Cys103, Cys146-Cys198, Cys247-Cys294, Cys336-Cys386, and Cys429-Cys485. 9 N-linked (GlcNAc...) asparagine glycosylation sites follow: Asn368, Asn471, Asn513, Asn556, Asn666, Asn710, Asn749, Asn796, and Asn809. Intrachain disulfides connect Cys526/Cys575 and Cys617/Cys669. A disulfide bridge connects residues Cys711 and Cys767. Cys810 and Cys867 form a disulfide bridge. 4 consecutive Fibronectin type-III domains span residues 887-984 (PPDP…TEEA), 989-1088 (PPMD…TLED), 1093-1189 (PPEN…TKED), and 1193-1288 (PPAG…AGKA). 6 N-linked (GlcNAc...) asparagine glycosylation sites follow: Asn926, Asn1082, Asn1144, Asn1162, Asn1275, and Asn1345. An Ig-like C2-type 10 domain is found at 1278-1377 (EKVTIEPAGK…TGGFDTIIVN (100 aa)). A disulfide bridge connects residues Cys1311 and Cys1363. Fibronectin type-III domains lie at 1383–1477 (PPDQ…THGR) and 1478–1578 (EPSF…TIPP). Asn1492, Asn1531, and Asn1561 each carry an N-linked (GlcNAc...) asparagine glycan. A helical membrane pass occupies residues 1592-1612 (LFTIGCPVILATLGVALLFIV). Residues 1613–2053 (RKKRKEKRLK…GAYSKSYTLV (441 aa)) are Cytoplasmic-facing. 4 disordered regions span residues 1715-1741 (PLID…HSTR), 1773-1803 (HGVT…STES), 1840-1862 (SSDQ…STPS), and 1974-2053 (LAMP…YTLV). Positions 1732–1741 (KNVKSAHSTR) are enriched in basic residues. Residues 1773 to 1789 (HGVTVTESDSYSASLSQ) are compositionally biased toward polar residues. Over residues 1977–2009 (PAPPAGTAPPAPGPTPAEPPTAPSAAPPAPSTE) the composition is skewed to pro residues. Residues 2029 to 2041 (EMSTSGVGRSQKQ) show a composition bias toward polar residues.

In terms of assembly, homodimer; mediates homophilic interactions to promote cell adhesion. Detected in heart, liver, pancreas, skeletal muscle, kidney and in brain, in particular in the amygdala, caudate nucleus, corpus callosum, hippocampus, substantia nigra, thalamus and subthalamus.

The protein resides in the cell membrane. Its subcellular location is the synapse. Its function is as follows. Cell adhesion molecule that plays a role in neuronal self-avoidance. Promotes repulsion between specific neuronal processes of either the same cell or the same subtype of cells. Promotes both isoneuronal self-avoidance for creating an orderly neurite arborization in retinal rod bipolar cells and heteroneuronal self-avoidance to maintain mosaic spacing between AII amacrine cells. Adhesion molecule that promotes lamina-specific synaptic connections in the retina: expressed in specific subsets of interneurons and retinal ganglion cells (RGCs) and promotes synaptic connectivity via homophilic interactions. In Homo sapiens (Human), this protein is Cell adhesion molecule DSCAML1 (DSCAML1).